A 1488-amino-acid chain; its full sequence is Chromosome partition protein MukB (1488 aa).

34-41 (GGNGAGKS) provides a ligand contact to ATP. Coiled-coil stretches lie at residues 326–418 (LEAD…QYNQ), 444–472 (LDTF…QTAH), and 509–602 (RHLA…QRAP). Residues 666–783 (PGGAEDQRLN…SLPIFGRAAR (118 aa)) form a flexible hinge region. Coiled-coil stretches lie at residues 835 to 923 (EAEI…AKLE), 977 to 1116 (EMLS…AKAG), and 1209 to 1265 (VEAI…LQSV). A disordered region spans residues 1049-1074 (ADSGAEERARQRRDELHAQLSNNRSR). A compositionally biased stretch (basic and acidic residues) spans 1051 to 1065 (SGAEERARQRRDELH).

Belongs to the SMC family. MukB subfamily. Homodimerization via its hinge domain. Binds to DNA via its C-terminal region. Interacts, and probably forms a ternary complex, with MukE and MukF via its C-terminal region. The complex formation is stimulated by calcium or magnesium. Interacts with tubulin-related protein FtsZ.

It localises to the cytoplasm. The protein localises to the nucleoid. Its function is as follows. Plays a central role in chromosome condensation, segregation and cell cycle progression. Functions as a homodimer, which is essential for chromosome partition. Involved in negative DNA supercoiling in vivo, and by this means organize and compact chromosomes. May achieve or facilitate chromosome segregation by condensation DNA from both sides of a centrally located replisome during cell division. This Salmonella typhimurium (strain LT2 / SGSC1412 / ATCC 700720) protein is Chromosome partition protein MukB.